Reading from the N-terminus, the 118-residue chain is Cytochrome b-c1 complex subunit 7 (118 aa).

Residues 1–32 are igE-binding. Immunodominant epitope; induces specific IgE antibody production in mice. Causes degranulation of rat basophilic leukemia (RBL) cells and the release of beta-hexosaminidase from them; it reads MVHLTKTLRFINNPGFRKFYYGLQGYNKYGLY.

Belongs to the UQCRB/QCR7 family. In terms of assembly, component of the ubiquinol-cytochrome c oxidoreductase (cytochrome b-c1 complex, complex III, CIII), a multisubunit enzyme composed of 3 respiratory subunits cytochrome b, cytochrome c1 and Rieske protein, 2 core protein subunits, and additional low-molecular weight protein subunits. The complex exists as an obligatory dimer and forms supercomplexes (SCs) in the inner mitochondrial membrane with cytochrome c oxidase (complex IV, CIV).

The protein resides in the mitochondrion inner membrane. Functionally, component of the ubiquinol-cytochrome c oxidoreductase, a multisubunit transmembrane complex that is part of the mitochondrial electron transport chain which drives oxidative phosphorylation. The respiratory chain contains 3 multisubunit complexes succinate dehydrogenase (complex II, CII), ubiquinol-cytochrome c oxidoreductase (cytochrome b-c1 complex, complex III, CIII) and cytochrome c oxidase (complex IV, CIV), that cooperate to transfer electrons derived from NADH and succinate to molecular oxygen, creating an electrochemical gradient over the inner membrane that drives transmembrane transport and the ATP synthase. The cytochrome b-c1 complex catalyzes electron transfer from ubiquinol to cytochrome c, linking this redox reaction to translocation of protons across the mitochondrial inner membrane, with protons being carried across the membrane as hydrogens on the quinol. In the process called Q cycle, 2 protons are consumed from the matrix, 4 protons are released into the intermembrane space and 2 electrons are passed to cytochrome c. This is Cytochrome b-c1 complex subunit 7 from Dermatophagoides pteronyssinus (European house dust mite).